A 124-amino-acid polypeptide reads, in one-letter code: Small ribosomal subunit protein uS12 (124 aa).

The residue at position 89 (aspartate 89) is a 3-methylthioaspartic acid.

Belongs to the universal ribosomal protein uS12 family. As to quaternary structure, part of the 30S ribosomal subunit. Contacts proteins S8 and S17. May interact with IF1 in the 30S initiation complex.

Functionally, with S4 and S5 plays an important role in translational accuracy. Interacts with and stabilizes bases of the 16S rRNA that are involved in tRNA selection in the A site and with the mRNA backbone. Located at the interface of the 30S and 50S subunits, it traverses the body of the 30S subunit contacting proteins on the other side and probably holding the rRNA structure together. The combined cluster of proteins S8, S12 and S17 appears to hold together the shoulder and platform of the 30S subunit. The polypeptide is Small ribosomal subunit protein uS12 (Buchnera aphidicola subsp. Acyrthosiphon pisum (strain 5A)).